A 197-amino-acid polypeptide reads, in one-letter code: MAGIGRLSTKGSVLLLCDMQEKFRPTIFQFTNVVSNAARLLQACRILNIPQILTEQYPKGLGPTVPELGAEGLKPHTKTSFSMMTESVQSSLKSMGDPQQVILCGIEAQACIACTAYDLLERGMEVHIVADAVSSRSQTDRLFALSRLRQSGVFLNTTEGVLLQLVQDAKHPNFKEIQKLLAHPSPDTGLLAFFSSL.

Belongs to the isochorismatase family.

This chain is Isochorismatase domain-containing protein 2 (isoc2), found in Danio rerio (Zebrafish).